A 191-amino-acid chain; its full sequence is Ribonuclease HII (191 aa).

The 185-residue stretch at 7 to 191 (ILMAGVDEVG…YSPVADLISK (185 aa)) folds into the RNase H type-2 domain. A divalent metal cation-binding residues include Asp-13, Glu-14, and Asp-103.

It belongs to the RNase HII family. The cofactor is Mn(2+). Requires Mg(2+) as cofactor.

It is found in the cytoplasm. It catalyses the reaction Endonucleolytic cleavage to 5'-phosphomonoester.. Endonuclease that specifically degrades the RNA of RNA-DNA hybrids. The chain is Ribonuclease HII from Legionella pneumophila subsp. pneumophila (strain Philadelphia 1 / ATCC 33152 / DSM 7513).